A 182-amino-acid polypeptide reads, in one-letter code: Transcription termination/antitermination protein NusG (182 aa).

Residues 131-161 form the KOW domain; that stretch reads GEVVRVNDGPFADFNGTVEEVDYEKSRLKVS.

It belongs to the NusG family.

Participates in transcription elongation, termination and antitermination. This chain is Transcription termination/antitermination protein NusG, found in Vibrio cholerae serotype O1 (strain ATCC 39315 / El Tor Inaba N16961).